An 89-amino-acid polypeptide reads, in one-letter code: Small ribosomal subunit protein bS20 (89 aa).

The segment covering 1-11 has biased composition (polar residues); the sequence is MANIKSQIKRN. A disordered region spans residues 1-22; it reads MANIKSQIKRNLTNEKRRLRNK.

The protein belongs to the bacterial ribosomal protein bS20 family.

Its function is as follows. Binds directly to 16S ribosomal RNA. In Frankia casuarinae (strain DSM 45818 / CECT 9043 / HFP020203 / CcI3), this protein is Small ribosomal subunit protein bS20.